The chain runs to 385 residues: Isocitrate dehydrogenase [NAD] subunit beta, mitochondrial (385 aa).

Residues 1–33 (MAALSRVRWLTRALVAAPNPGAWRSLCTSTVAQ) constitute a mitochondrion transit peptide. Lysine 199 is modified (N6-acetyllysine).

This sequence belongs to the isocitrate and isopropylmalate dehydrogenases family. As to quaternary structure, heterooligomer of subunits alpha (IDH3A), beta (IDH3B), and gamma (IDH3G) in the apparent ratio of 2:1:1. The heterodimer containing one IDH3A and one IDH3B subunit and the heterodimer containing one IDH3A and one IDH3G subunit assemble into a heterotetramer (which contains two subunits of IDH3A, one of IDH3B and one of IDH3G) and further into the heterooctamer. As to expression, isoform A is predominant in heart muscle; also found in brain, kidney and liver. Isoform B is present in kidney and liver.

It is found in the mitochondrion. The heterotetramer and the heterodimer composed of IDH3A and IDH3G subunits can be allosterically activated by citrate (CIT) or/and ADP, and the two activators can act independently or synergistically. The heterodimer composed of IDH3A and IDH3B subunits cannot be allosterically regulated and the allosteric regulation of the heterotetramer is through the IDH3G subunit and not the IDH3B subunit. The IDH3G subunit contains the allosteric site which consists of a CIT-binding site and an ADP-binding site, and the binding of CIT and ADP causes conformational changes at the allosteric site which are transmitted to the active site in the catalytic subunit (IDH3A) through a cascade of conformational changes at the heterodimer interface, leading to stabilization of the isocitrate-binding at the active site and thus activation of the enzyme. ATP can activate the heterotetramer and the heterodimer composed of IDH3A and IDH3G subunits at low concentrations but inhibits their activities at high concentrations, whereas ATP exhibits only inhibitory effect on the heterodimer composed of IDH3A and IDH3B subunits. Its function is as follows. Plays a structural role to facilitate the assembly and ensure the full activity of the enzyme catalyzing the decarboxylation of isocitrate (ICT) into alpha-ketoglutarate. The heterodimer composed of the alpha (IDH3A) and beta (IDH3B) subunits and the heterodimer composed of the alpha (IDH3A) and gamma (IDH3G) subunits, have considerable basal activity but the full activity of the heterotetramer (containing two subunits of IDH3A, one of IDH3B and one of IDH3G) requires the assembly and cooperative function of both heterodimers. The polypeptide is Isocitrate dehydrogenase [NAD] subunit beta, mitochondrial (IDH3B) (Bos taurus (Bovine)).